The sequence spans 223 residues: Guanylate kinase (223 aa).

The segment at 1–22 is disordered; that stretch reads MTADGGPDVRHGTRPEPSGDGR. Basic and acidic residues predominate over residues 7–19; that stretch reads PDVRHGTRPEPSG. Residues 21 to 201 enclose the Guanylate kinase-like domain; it reads GRVVVLSGPS…ACAELVSLLV (181 aa). 28–35 contributes to the ATP binding site; it reads GPSAVGKS. Positions 204-223 are disordered; sequence APDRHDTSGRTGRQTTSHPD. Positions 212 to 223 are enriched in polar residues; that stretch reads GRTGRQTTSHPD.

The protein belongs to the guanylate kinase family.

The protein resides in the cytoplasm. It catalyses the reaction GMP + ATP = GDP + ADP. Its function is as follows. Essential for recycling GMP and indirectly, cGMP. The polypeptide is Guanylate kinase (Mycolicibacterium paratuberculosis (strain ATCC BAA-968 / K-10) (Mycobacterium paratuberculosis)).